The primary structure comprises 993 residues: Synaptonemal complex protein 1 (993 aa).

The Mediates head to head self-assembly of N-terminal ends signature appears at 98-108 (PMSRLYSKLYK). The short motif at 114–117 (KKWK) is the Nuclear localization signal element. Coiled coils occupy residues 117-172 (KVSI…LIKE) and 215-688 (IEKM…EIEN). Residues 203-359 (ETRQVYVDLN…SQLTEVKEAQ (157 aa)) form an interaction with SYCE3 region. Residues 694 to 788 (GKLLGEVEKA…VSLKKQLEIE (95 aa)) form a required for pH-induced assembly of C-terminal ends into antiparallel tetramers region. Positions 697-700 (LGEV) match the Nuclear localization signal motif. Residues 764 to 808 (KIALETELSNIRNELVSLKKQLEIEKEEKEKLKMAKENTAILKDK) adopt a coiled-coil conformation. A DNA-binding region spans residues 801–993 (NTAILKDKKD…RLKEAEKLFS (193 aa)). At Ser820 the chain carries Phosphoserine. The interval 824-861 (TSWKFDSKTTPSQNISRLSSSMDSGKSKDNRDNLRASA) is disordered. Over residues 831 to 847 (KTTPSQNISRLSSSMDS) the composition is skewed to polar residues. Positions 848-857 (GKSKDNRDNL) are enriched in basic and acidic residues. The short motif at 898–901 (KKRK) is the Nuclear localization signal element.

Structural component of synaptonemal complexes. Homotetramer that consists of an N-terminal four-helical bundle that bifurcates into two elongated C-terminal dimeric coiled coils. This tetrameric building block potentially self-assembles into a supramolecular zipper-like lattice to mediate meiotic chromosome synapsis. Self-assembly is likely initiated by local proton density at chromosome axis, which is predicted to trigger antiparallel back to back assembly of adjacent C-terminal ends into tetrameric structures that anchor to chromosomal DNA. Then the N-terminal ends are predicted to undergo cooperative antiparallel head to head assembly at the midline of synaptonemal complexes central element to form a zipper-like lattice between properly aligned homologous chromosomes. The nascent synapsis generated by SYCP1 is stabilized through interaction with central element proteins SYCE1 and SYCE2. Interacts (via tetrameric core) with SYCE3; the interaction remodels SYCP1 homotetramers to 2:1 heterotrimers with SYCE3. SYCP1/SYCE3 heterotrimers form lattice assemblies as part of the mature synaptonemal complex via both lateral and head-to-head interactions. Forms a complex with EWSR1, PRDM9, SYCP3 and REC8; complex formation is dependent of phosphorylated form of REC8 and requires PRDM9 bound to hotspot DNA; EWSR1 joins PRDM9 with the chromosomal axis through REC8. Interacts with SPO16. In terms of tissue distribution, detected in testis. Detected in spermatocytes (at protein level).

Its subcellular location is the nucleus. The protein localises to the chromosome. The protein resides in the centromere. In terms of biological role, major component of the transverse filaments of synaptonemal complexes, formed between homologous chromosomes during meiotic prophase. Required for normal assembly of the central element of the synaptonemal complexes. Required for normal centromere pairing during meiosis. Required for normal meiotic chromosome synapsis during oocyte and spermatocyte development and for normal male and female fertility. This chain is Synaptonemal complex protein 1, found in Mus musculus (Mouse).